We begin with the raw amino-acid sequence, 399 residues long: Elongation factor Tu (399 aa).

The region spanning Lys-10–Thr-209 is the tr-type G domain. The tract at residues Gly-19–Thr-26 is G1. Gly-19–Thr-26 serves as a coordination point for GTP. Thr-26 provides a ligand contact to Mg(2+). Positions Gly-60–Ala-64 are G2. Residues Asp-81 to Gly-84 are G3. GTP-binding positions include Asp-81 to His-85 and Asn-136 to Asp-139. The interval Asn-136 to Asp-139 is G4. Positions Ser-174–Lys-176 are G5.

It belongs to the TRAFAC class translation factor GTPase superfamily. Classic translation factor GTPase family. EF-Tu/EF-1A subfamily. As to quaternary structure, monomer.

It is found in the cytoplasm. The catalysed reaction is GTP + H2O = GDP + phosphate + H(+). In terms of biological role, GTP hydrolase that promotes the GTP-dependent binding of aminoacyl-tRNA to the A-site of ribosomes during protein biosynthesis. This chain is Elongation factor Tu, found in Sulfurimonas denitrificans (strain ATCC 33889 / DSM 1251) (Thiomicrospira denitrificans (strain ATCC 33889 / DSM 1251)).